Here is a 531-residue protein sequence, read N- to C-terminus: Peptide chain release factor 3 (531 aa).

Residues 13 to 282 (SKRRTFAIIS…GLTQWAPSPM (270 aa)) form the tr-type G domain. GTP-binding positions include 22-29 (SHPDAGKT), 90-94 (DTPGH), and 144-147 (NKLD).

Belongs to the TRAFAC class translation factor GTPase superfamily. Classic translation factor GTPase family. PrfC subfamily.

Its subcellular location is the cytoplasm. Its function is as follows. Increases the formation of ribosomal termination complexes and stimulates activities of RF-1 and RF-2. It binds guanine nucleotides and has strong preference for UGA stop codons. It may interact directly with the ribosome. The stimulation of RF-1 and RF-2 is significantly reduced by GTP and GDP, but not by GMP. This chain is Peptide chain release factor 3, found in Vibrio cholerae serotype O1 (strain ATCC 39315 / El Tor Inaba N16961).